The following is an 85-amino-acid chain: MAHKKGQGSTQNNRDSIGRRLGVKKFGGEFVRAGNIIIRQRGTATHAGSNVGLGKDHTIFALIDGFVKFERKDKNRKKVSVYPAA.

Belongs to the bacterial ribosomal protein bL27 family.

This Campylobacter curvus (strain 525.92) protein is Large ribosomal subunit protein bL27.